Here is a 341-residue protein sequence, read N- to C-terminus: Glycerol-3-phosphate dehydrogenase [NAD(P)+] (341 aa).

NADPH-binding residues include serine 14, phenylalanine 15, arginine 35, and lysine 108. The sn-glycerol 3-phosphate site is built by lysine 108 and glycine 136. Alanine 140 contributes to the NADPH binding site. Sn-glycerol 3-phosphate-binding residues include lysine 191, aspartate 244, serine 254, arginine 255, and asparagine 256. Lysine 191 functions as the Proton acceptor in the catalytic mechanism. An NADPH-binding site is contributed by arginine 255. Residues valine 279 and glutamate 281 each contribute to the NADPH site.

It belongs to the NAD-dependent glycerol-3-phosphate dehydrogenase family.

It localises to the cytoplasm. The enzyme catalyses sn-glycerol 3-phosphate + NAD(+) = dihydroxyacetone phosphate + NADH + H(+). It carries out the reaction sn-glycerol 3-phosphate + NADP(+) = dihydroxyacetone phosphate + NADPH + H(+). It functions in the pathway membrane lipid metabolism; glycerophospholipid metabolism. Functionally, catalyzes the reduction of the glycolytic intermediate dihydroxyacetone phosphate (DHAP) to sn-glycerol 3-phosphate (G3P), the key precursor for phospholipid synthesis. This chain is Glycerol-3-phosphate dehydrogenase [NAD(P)+], found in Pseudomonas savastanoi pv. phaseolicola (strain 1448A / Race 6) (Pseudomonas syringae pv. phaseolicola (strain 1448A / Race 6)).